The sequence spans 512 residues: MAVAQELYSFPASKLDSFVAQWLQPTREWKEEVLETVQTVEQFLRQENFRGERGPAQDVRVLKVLKVGCFGNGTVLRSTTDVELVVFLSCFHSFQEEAKHHQAVLRLIQKRMSYCRDLLDLGLSNLSVIEEVPSSLIFTIQTRETWEPITVTIVPAFRALGPSCPNSAEVYVNLIKANGYPGNFSPSFSELQRSFVKHRPTKLKSLLRLVKHWYQQYVRDKCPRANLPPLYALELLTVYAWEAGTQEDSNFRLDEGLATVMELLQDHELLCIYWTKYYTLQHPVIERFVRRQLKGERPIILDPADPTHNVAQGYRWDIVAQRASQCLKQDCCYDDRDAPVPSWTVKRAPDIQVTVQQWGHPDLILWVNPYEPIKKLKEKIRLSRGYSGLQRLSFQEPGGQRQLIRSQCSLAYYGIFCDTQICLLDTISPEIQVFVKNPDGGSHAYAIHPLDFVLSLKQQIEDRQGLQSQEQQLEFQGRVLEDWFDFKSYGIQDSITIILSRKREGKAPSAPS.

Ubiquitin-like domains follow at residues 351 to 430 (IQVT…ISPE) and 431 to 507 (IQVF…EGKA).

This sequence belongs to the 2-5A synthase family. In terms of assembly, specifically interacts with the ligand binding domain of the thyroid receptor (TR). TRIP14 does not require the presence of thyroid hormone for its interaction. Binds MBD1.

The protein localises to the nucleus. Its subcellular location is the nucleolus. It is found in the cytoplasm. In terms of biological role, does not have 2'-5'-OAS activity, but can bind double-stranded RNA. Displays antiviral activity via an alternative antiviral pathway independent of RNase L. This is 2'-5'-oligoadenylate synthase-like protein 1 (Oasl) from Rattus norvegicus (Rat).